The chain runs to 332 residues: Fructose-1,6-bisphosphatase class 1 (332 aa).

The Mg(2+) site is built by Glu-89, Asp-110, Leu-112, and Asp-113. Residues 113 to 116 (DGSS), Asn-206, Tyr-239, 257 to 259 (YLY), and Lys-269 contribute to the substrate site. Glu-275 contacts Mg(2+).

It belongs to the FBPase class 1 family. In terms of assembly, homotetramer. Requires Mg(2+) as cofactor.

Its subcellular location is the cytoplasm. The enzyme catalyses beta-D-fructose 1,6-bisphosphate + H2O = beta-D-fructose 6-phosphate + phosphate. The protein operates within carbohydrate biosynthesis; gluconeogenesis. This Klebsiella pneumoniae (strain 342) protein is Fructose-1,6-bisphosphatase class 1.